We begin with the raw amino-acid sequence, 187 residues long: Ribosome-recycling factor (187 aa).

This sequence belongs to the RRF family.

The protein localises to the cytoplasm. Responsible for the release of ribosomes from messenger RNA at the termination of protein biosynthesis. May increase the efficiency of translation by recycling ribosomes from one round of translation to another. The protein is Ribosome-recycling factor of Rhodopseudomonas palustris (strain HaA2).